A 215-amino-acid polypeptide reads, in one-letter code: Pyridoxine/pyridoxamine 5'-phosphate oxidase (215 aa).

Substrate contacts are provided by residues 9 to 12 (RRDY) and lysine 69. Residues 64–69 (RVLLLK), 79–80 (FT), lysine 86, and glutamine 108 contribute to the FMN site. Residues tyrosine 126, arginine 130, and serine 134 each contribute to the substrate site. FMN is bound by residues 143–144 (QS) and tryptophan 188. 194–196 (RLH) contributes to the substrate binding site. Arginine 198 serves as a coordination point for FMN.

It belongs to the pyridoxamine 5'-phosphate oxidase family. Homodimer. It depends on FMN as a cofactor.

The catalysed reaction is pyridoxamine 5'-phosphate + O2 + H2O = pyridoxal 5'-phosphate + H2O2 + NH4(+). It carries out the reaction pyridoxine 5'-phosphate + O2 = pyridoxal 5'-phosphate + H2O2. The protein operates within cofactor metabolism; pyridoxal 5'-phosphate salvage; pyridoxal 5'-phosphate from pyridoxamine 5'-phosphate: step 1/1. Its pathway is cofactor metabolism; pyridoxal 5'-phosphate salvage; pyridoxal 5'-phosphate from pyridoxine 5'-phosphate: step 1/1. Catalyzes the oxidation of either pyridoxine 5'-phosphate (PNP) or pyridoxamine 5'-phosphate (PMP) into pyridoxal 5'-phosphate (PLP). The chain is Pyridoxine/pyridoxamine 5'-phosphate oxidase from Pseudomonas syringae pv. tomato (strain ATCC BAA-871 / DC3000).